Consider the following 588-residue polypeptide: BTB/POZ domain-containing protein At3g26490 (588 aa).

In terms of domain architecture, BTB spans 28-99 (NDLVIQVKST…CYGITITLCA (72 aa)). Residues 218-507 (RWWGEDLAEL…VQILFVEQAR (290 aa)) form the NPH3 domain. Phosphoserine occurs at positions 376 and 378. At tyrosine 448 the chain carries Phosphotyrosine. Positions 529-554 (FTTRREEGGQEEEERDETKPSGGFLQ) are disordered.

It belongs to the NPH3 family.

It participates in protein modification; protein ubiquitination. Functionally, may act as a substrate-specific adapter of an E3 ubiquitin-protein ligase complex (CUL3-RBX1-BTB) which mediates the ubiquitination and subsequent proteasomal degradation of target proteins. The chain is BTB/POZ domain-containing protein At3g26490 from Arabidopsis thaliana (Mouse-ear cress).